Here is a 219-residue protein sequence, read N- to C-terminus: Acetylxylan esterase (219 aa).

Residue Ser15 is the Nucleophile of the active site. Active-site charge relay system residues include Asp191 and His194.

It belongs to the 'GDSL' lipolytic enzyme family. As to quaternary structure, homooctamer, presenting a unique donut-shaped quaternary structure built of two staggered tetrameric rings. The eight active sites are organized in four closely situated pairs, which face the relatively wide internal cavity.

The protein localises to the cytoplasm. The enzyme catalyses Deacetylation of xylans and xylo-oligosaccharides.. It participates in glycan degradation; xylan degradation. Its function is as follows. Acetylxylan esterase involved in the degradation of xylan, a major structural heterogeneous polysaccharide found in plant biomass representing the second most abundant polysaccharide in the biosphere, after cellulose. Cleaves acetyl side groups from the xylose backbone units of the hemicellulolytic polymer xylan and xylo-oligosaccharides. Hydrolyzes about 20%-30% of the available acetyl groups on fully acetylated birch wood xylan. Completely deacetylates xylobiose peracetate (fully acetylated), and is active on both the alpha- and beta-forms of the sugar. Also hydrolyzes fully acetylated methyl-beta-D-xylopyranoside and methyl-beta-D-glucopyranoside, and the synthetic substrates 2-naphthyl acetate, 4-nitrophenyl acetate, 4-methylumbelliferyl acetate, and phenyl acetate. This chain is Acetylxylan esterase, found in Geobacillus stearothermophilus (Bacillus stearothermophilus).